A 131-amino-acid chain; its full sequence is Small ribosomal subunit protein bS16 (131 aa).

The span at I87 to E117 shows a compositional bias: basic and acidic residues. The tract at residues I87–A131 is disordered.

This sequence belongs to the bacterial ribosomal protein bS16 family.

This chain is Small ribosomal subunit protein bS16, found in Prochlorococcus marinus (strain SARG / CCMP1375 / SS120).